A 356-amino-acid chain; its full sequence is Nicotinate-nucleotide--dimethylbenzimidazole phosphoribosyltransferase (356 aa).

Glu317 serves as the catalytic Proton acceptor.

This sequence belongs to the CobT family. In terms of assembly, homodimer.

The enzyme catalyses 5,6-dimethylbenzimidazole + nicotinate beta-D-ribonucleotide = alpha-ribazole 5'-phosphate + nicotinate + H(+). It participates in nucleoside biosynthesis; alpha-ribazole biosynthesis; alpha-ribazole from 5,6-dimethylbenzimidazole: step 1/2. Functionally, catalyzes the synthesis of alpha-ribazole-5'-phosphate from nicotinate mononucleotide (NAMN) and 5,6-dimethylbenzimidazole (DMB). This Salmonella paratyphi A (strain ATCC 9150 / SARB42) protein is Nicotinate-nucleotide--dimethylbenzimidazole phosphoribosyltransferase.